The sequence spans 35 residues: Photosystem II reaction center protein T (35 aa).

Residues 3 to 23 (ALVYTFLLVGTLGIIFFAIFF) form a helical membrane-spanning segment.

The protein belongs to the PsbT family. In terms of assembly, PSII is composed of 1 copy each of membrane proteins PsbA, PsbB, PsbC, PsbD, PsbE, PsbF, PsbH, PsbI, PsbJ, PsbK, PsbL, PsbM, PsbT, PsbY, PsbZ, Psb30/Ycf12, at least 3 peripheral proteins of the oxygen-evolving complex and a large number of cofactors. It forms dimeric complexes.

Its subcellular location is the plastid. The protein localises to the chloroplast thylakoid membrane. In terms of biological role, found at the monomer-monomer interface of the photosystem II (PS II) dimer, plays a role in assembly and dimerization of PSII. PSII is a light-driven water plastoquinone oxidoreductase, using light energy to abstract electrons from H(2)O, generating a proton gradient subsequently used for ATP formation. This Zygnema circumcarinatum (Green alga) protein is Photosystem II reaction center protein T.